The chain runs to 164 residues: AINRQINLELYASYVYLSMSYYFDRDDVALKNFAKYFLHQSHEEREHAEKLMKLQNQRGGRIFLQDIKKPEYDDWESGLNAMECALHLEKSVNQSLLELHKLATDKNDPHLCDFIETHYLNEQVKSIKELGDHVTNLRKMGAPESGMAEYLFDKHTLGHSDNES.

The region spanning 1 to 141 is the Ferritin-like diiron domain; sequence AINRQINLEL…DHVTNLRKMG (141 aa). Fe cation contacts are provided by Glu-9, Glu-44, His-47, Glu-89, and Gln-123. A phosphoserine mark is found at Ser-160 and Ser-164.

This sequence belongs to the ferritin family. As to quaternary structure, oligomer of 24 subunits. There are two types of subunits: L (light) chain and H (heavy) chain. The major chain can be light or heavy, depending on the species and tissue type. The functional molecule forms a roughly spherical shell with a diameter of 12 nm and contains a central cavity into which the insoluble mineral iron core is deposited. Interacts with NCOA4; NCOA4 promotes targeting of the iron-binding ferritin complex to autolysosomes following starvation or iron depletion.

The protein resides in the cytoplasm. The protein localises to the lysosome. It localises to the cytoplasmic vesicle. It is found in the autophagosome. It catalyses the reaction 4 Fe(2+) + O2 + 4 H(+) = 4 Fe(3+) + 2 H2O. In terms of biological role, stores iron in a soluble, non-toxic, readily available form. Important for iron homeostasis. Has ferroxidase activity. Iron is taken up in the ferrous form and deposited as ferric hydroxides after oxidation. Also plays a role in delivery of iron to cells. Mediates iron uptake in capsule cells of the developing kidney. Delivery to lysosomes is mediated by the cargo receptor NCOA4 for autophagic degradation and release of iron. The protein is Ferritin heavy chain (FTH1) of Oryctolagus cuniculus (Rabbit).